Here is a 607-residue protein sequence, read N- to C-terminus: Hemagglutinin glycoprotein (607 aa).

Residues 1–37 (MLSYQDKAGAFYKDNARANSTKLSLVTEEHGGRRPPY) lie on the Intravirion side of the membrane. Residues 38–58 (LLFVLLVLLVGILALLAITGV) traverse the membrane as a helical segment. The Virion surface portion of the chain corresponds to 59 to 607 (RFHQVSTSNM…IRFSCNRSNP (549 aa)). Asparagine 149, asparagine 391, asparagine 422, asparagine 456, asparagine 587, and asparagine 603 each carry an N-linked (GlcNAc...) asparagine; by host glycan.

It belongs to the paramyxoviruses hemagglutinin-neuraminidase family. Non-sialidase subfamily. Binds canine SLAMF1 at the cell surface.

Its subcellular location is the virion membrane. The protein localises to the host cell membrane. Attaches the virus to cell receptors and thereby initiating infection. Binding of H protein to the receptor induces a conformational change that allows the F protein to trigger virion/cell membranes fusion. The cellular receptor might be SLAM, and may explain the lymphotropism of the virus. This Ailuropoda melanoleuca (Giant panda) protein is Hemagglutinin glycoprotein (H).